Reading from the N-terminus, the 359-residue chain is Peptide chain release factor 1 (359 aa).

An N5-methylglutamine modification is found at Q236. The segment at 288–308 is disordered; the sequence is QDEQDAERKSTIGTGDRSERI. Residues 293 to 308 are compositionally biased toward basic and acidic residues; that stretch reads AERKSTIGTGDRSERI.

It belongs to the prokaryotic/mitochondrial release factor family. Post-translationally, methylated by PrmC. Methylation increases the termination efficiency of RF1.

It is found in the cytoplasm. In terms of biological role, peptide chain release factor 1 directs the termination of translation in response to the peptide chain termination codons UAG and UAA. The sequence is that of Peptide chain release factor 1 from Streptococcus uberis (strain ATCC BAA-854 / 0140J).